A 573-amino-acid chain; its full sequence is 2-succinyl-5-enolpyruvyl-6-hydroxy-3-cyclohexene-1-carboxylate synthase (573 aa).

This sequence belongs to the TPP enzyme family. MenD subfamily. In terms of assembly, homodimer. It depends on Mg(2+) as a cofactor. Mn(2+) serves as cofactor. Requires thiamine diphosphate as cofactor.

The enzyme catalyses isochorismate + 2-oxoglutarate + H(+) = 5-enolpyruvoyl-6-hydroxy-2-succinyl-cyclohex-3-ene-1-carboxylate + CO2. Its pathway is quinol/quinone metabolism; 1,4-dihydroxy-2-naphthoate biosynthesis; 1,4-dihydroxy-2-naphthoate from chorismate: step 2/7. The protein operates within quinol/quinone metabolism; menaquinone biosynthesis. In terms of biological role, catalyzes the thiamine diphosphate-dependent decarboxylation of 2-oxoglutarate and the subsequent addition of the resulting succinic semialdehyde-thiamine pyrophosphate anion to isochorismate to yield 2-succinyl-5-enolpyruvyl-6-hydroxy-3-cyclohexene-1-carboxylate (SEPHCHC). In Shewanella sp. (strain MR-4), this protein is 2-succinyl-5-enolpyruvyl-6-hydroxy-3-cyclohexene-1-carboxylate synthase.